Reading from the N-terminus, the 117-residue chain is MSNQLYVLAEQLEQAIRTSSDFQQLKQAYEAVRRDETAYRLFTNFRNLQMRLHEKQMTGAEILPEEIEQAQKAMALTQQNEKLAQLMTLEQRMSMVLSDIQQITMKPLEELYRSFAE.

It belongs to the UPF0342 family.

The chain is UPF0342 protein GWCH70_0629 from Geobacillus sp. (strain WCH70).